Consider the following 212-residue polypeptide: 2,3-bisphosphoglycerate-dependent phosphoglycerate mutase (212 aa).

Residues 9-16 (RHGQSEWN), 22-23 (TG), arginine 61, 88-91 (ERDY), lysine 99, 115-116 (RR), and 159-160 (GN) each bind substrate. Catalysis depends on histidine 10, which acts as the Tele-phosphohistidine intermediate. Residue glutamate 88 is the Proton donor/acceptor of the active site.

Belongs to the phosphoglycerate mutase family. BPG-dependent PGAM subfamily. Homodimer.

It catalyses the reaction (2R)-2-phosphoglycerate = (2R)-3-phosphoglycerate. Its pathway is carbohydrate degradation; glycolysis; pyruvate from D-glyceraldehyde 3-phosphate: step 3/5. Its function is as follows. Catalyzes the interconversion of 2-phosphoglycerate and 3-phosphoglycerate. The chain is 2,3-bisphosphoglycerate-dependent phosphoglycerate mutase from Methylorubrum extorquens (strain CM4 / NCIMB 13688) (Methylobacterium extorquens).